The primary structure comprises 334 residues: Ferredoxin--NADP reductase (334 aa).

FAD contacts are provided by Asp-33, Gln-41, Tyr-46, Ala-86, Phe-120, Asp-286, and Thr-327.

It belongs to the ferredoxin--NADP reductase type 2 family. Homodimer. It depends on FAD as a cofactor.

The enzyme catalyses 2 reduced [2Fe-2S]-[ferredoxin] + NADP(+) + H(+) = 2 oxidized [2Fe-2S]-[ferredoxin] + NADPH. The sequence is that of Ferredoxin--NADP reductase from Rickettsia massiliae (strain Mtu5).